Here is a 251-residue protein sequence, read N- to C-terminus: Hydroxyacylglutathione hydrolase (251 aa).

Residues H53, H55, D57, H58, H110, D127, and H165 each contribute to the Zn(2+) site.

The protein belongs to the metallo-beta-lactamase superfamily. Glyoxalase II family. In terms of assembly, monomer. Zn(2+) serves as cofactor.

The catalysed reaction is an S-(2-hydroxyacyl)glutathione + H2O = a 2-hydroxy carboxylate + glutathione + H(+). It participates in secondary metabolite metabolism; methylglyoxal degradation; (R)-lactate from methylglyoxal: step 2/2. In terms of biological role, thiolesterase that catalyzes the hydrolysis of S-D-lactoyl-glutathione to form glutathione and D-lactic acid. The protein is Hydroxyacylglutathione hydrolase of Yersinia pestis (strain Pestoides F).